The chain runs to 206 residues: 2-phospho-L-lactate guanylyltransferase (206 aa).

It belongs to the CofC family. As to quaternary structure, homodimer.

The catalysed reaction is (2S)-2-phospholactate + GTP + H(+) = (2S)-lactyl-2-diphospho-5'-guanosine + diphosphate. The protein operates within cofactor biosynthesis; coenzyme F420 biosynthesis. Guanylyltransferase that catalyzes the activation of (2S)-2-phospholactate (2-PL) as (2S)-lactyl-2-diphospho-5'-guanosine, via the condensation of 2-PL with GTP. It is involved in the biosynthesis of coenzyme F420, a hydride carrier cofactor. The sequence is that of 2-phospho-L-lactate guanylyltransferase from Haloferax volcanii (strain ATCC 29605 / DSM 3757 / JCM 8879 / NBRC 14742 / NCIMB 2012 / VKM B-1768 / DS2) (Halobacterium volcanii).